Consider the following 173-residue polypeptide: Small ribosomal subunit protein uS5 (173 aa).

The S5 DRBM domain occupies 17–80; that stretch reads WQERVIQIRR…ADGKKQLIDV (64 aa).

The protein belongs to the universal ribosomal protein uS5 family. Part of the 30S ribosomal subunit. Contacts proteins S4 and S8.

Functionally, with S4 and S12 plays an important role in translational accuracy. Its function is as follows. Located at the back of the 30S subunit body where it stabilizes the conformation of the head with respect to the body. In Rippkaea orientalis (strain PCC 8801 / RF-1) (Cyanothece sp. (strain PCC 8801)), this protein is Small ribosomal subunit protein uS5.